We begin with the raw amino-acid sequence, 99 residues long: Malonate decarboxylase acyl carrier protein (99 aa).

The residue at position 25 (Ser-25) is an O-(phosphoribosyl dephospho-coenzyme A)serine.

This sequence belongs to the MdcC family. Post-translationally, covalently binds the prosthetic group of malonate decarboxylase.

Its subcellular location is the cytoplasm. Its function is as follows. Subunit of malonate decarboxylase, it is an acyl carrier protein to which acetyl and malonyl thioester residues are bound via a 2'-(5''-phosphoribosyl)-3'-dephospho-CoA prosthetic group and turn over during the catalytic mechanism. This Stutzerimonas stutzeri (strain A1501) (Pseudomonas stutzeri) protein is Malonate decarboxylase acyl carrier protein.